The sequence spans 520 residues: Hydroxymethylglutaryl-CoA synthase, cytoplasmic (520 aa).

A Phosphoserine modification is found at Ser-4. (3S)-3-hydroxy-3-methylglutaryl-CoA-binding residues include Asp-43 and Ala-44. 44–46 (AGK) lines the CoA pocket. N6-acetyllysine is present on Lys-46. Glu-95 (proton donor/acceptor) is an active-site residue. Cys-129, Asn-167, Thr-171, Ser-221, and His-264 together coordinate (3S)-3-hydroxy-3-methylglutaryl-CoA. Cys-129 acts as the Acyl-thioester intermediate in catalysis. A CoA-binding site is contributed by Asn-167. CoA is bound at residue Ser-221. Residue His-264 is the Proton donor/acceptor of the active site. CoA-binding residues include Lys-269 and Lys-273. Positions 273, 343, and 377 each coordinate (3S)-3-hydroxy-3-methylglutaryl-CoA. Lys-273 is subject to N6-acetyllysine. Residues 486 to 520 (SNTATEHIPSPAKKVPRLPATAAESESAVISNGEH) are disordered. Residues Ser-495 and Ser-516 each carry the phosphoserine modification.

It belongs to the thiolase-like superfamily. HMG-CoA synthase family. In terms of assembly, homodimer.

It localises to the cytoplasm. It catalyses the reaction acetoacetyl-CoA + acetyl-CoA + H2O = (3S)-3-hydroxy-3-methylglutaryl-CoA + CoA + H(+). The protein operates within metabolic intermediate biosynthesis; (R)-mevalonate biosynthesis; (R)-mevalonate from acetyl-CoA: step 2/3. Its function is as follows. This enzyme condenses acetyl-CoA with acetoacetyl-CoA to form HMG-CoA, which is converted by HMG-CoA reductase (HMGCR) into mevalonate, a precursor for cholesterol synthesis. The protein is Hydroxymethylglutaryl-CoA synthase, cytoplasmic of Cricetulus griseus (Chinese hamster).